The following is a 140-amino-acid chain: Large ribosomal subunit protein bL17 (140 aa).

This sequence belongs to the bacterial ribosomal protein bL17 family. Part of the 50S ribosomal subunit. Contacts protein L32.

In Paracoccus denitrificans (strain Pd 1222), this protein is Large ribosomal subunit protein bL17.